The primary structure comprises 430 residues: DNA repair protein recA homolog 3, mitochondrial (430 aa).

Residues 1–35 (MARILRNVYSLRSSLFSSELLRRSVVGTSFQLRGF) constitute a mitochondrion transit peptide. 119 to 126 (GPEASGKT) contacts ATP. The tract at residues 385 to 415 (DEAADKETESESEEEDSLRVVVSPDNTDDES) is disordered.

Belongs to the RecA family.

It is found in the mitochondrion. Its function is as follows. Involved in recombination ability and DNA strand transfer activity. The polypeptide is DNA repair protein recA homolog 3, mitochondrial (Arabidopsis thaliana (Mouse-ear cress)).